The chain runs to 218 residues: Sodium channel regulatory subunit beta-1 (218 aa).

A signal peptide spans 1–18; that stretch reads MGRLLAFVVGAALVSSAW. Residues 19-157 are Extracellular-facing; that stretch reads GGCVEVDSET…DKANRDMASI (139 aa). 2 cysteine pairs are disulfide-bonded: cysteine 21-cysteine 43 and cysteine 40-cysteine 121. The 129-residue stretch at 22–150 folds into the Ig-like C2-type domain; it reads VEVDSETEAV…KIHLEVVDKA (129 aa). N-linked (GlcNAc...) asparagine glycosylation is found at asparagine 93, asparagine 110, asparagine 114, and asparagine 135. A helical membrane pass occupies residues 158–179; sequence VSEIMMYVLIVVLTIWLVAEMV. Residues 180–218 lie on the Cytoplasmic side of the membrane; the sequence is YCYKKIAAATEAAAQENASEYLAITSESKENCTGVQVAE.

It belongs to the sodium channel auxiliary subunit SCN1B (TC 8.A.17) family. A voltage-gated sodium (Nav) channel consists of an ion-conducting pore-forming alpha subunit functional on its own that is regulated by one or more beta subunits. Interacts with SCN1A; regulatory subunit of SCN1A/Nav1.1. Interacts with SCN3A; regulatory subunit of SCN3A/Nav1.3. Interacts with SCN4A; regulatory subunit of SCN4A/Nav1.4. Interacts with SCN5A; regulatory subunit of SCN5A/Nav1.5. Interacts with SCN8A; regulatory subunit of SCN8A/Nav1.6. Interacts with SCN9A; regulatory subunit of SCN9A/Nav1.7. Interacts with SCN10A; regulatory subunit of SCN10A/Nav1.8. Interacts with NFASC. Interacts with TMEM65.

It localises to the cell membrane. The protein resides in the perikaryon. The protein localises to the cell projection. Its subcellular location is the axon. Its function is as follows. Regulatory subunit of multiple voltage-gated sodium (Nav) channels directly mediating the depolarization of excitable membranes. Navs, also called VGSCs (voltage-gated sodium channels) or VDSCs (voltage-dependent sodium channels), operate by switching between closed and open conformations depending on the voltage difference across the membrane. In the open conformation they allow Na(+) ions to selectively pass through the pore, along their electrochemical gradient. The influx of Na+ ions provokes membrane depolarization, initiating the propagation of electrical signals throughout cells and tissues. The accessory beta subunits participate in localization and functional modulation of the Nav channels. Modulates the activity of SCN1A/Nav1.1, SCN2A/Nav1.2, SCN3A/Nav1.3, SCN4A/Nav1.4, SCN5A/Nav1.5, SCN8A/Nav1.6, SCN9A/Nav1.7 and SCN10A/Nav1.8. The protein is Sodium channel regulatory subunit beta-1 of Oryctolagus cuniculus (Rabbit).